A 171-amino-acid chain; its full sequence is 3-hydroxydecanoyl-[acyl-carrier-protein] dehydratase (171 aa).

Residue histidine 70 is part of the active site.

It belongs to the thioester dehydratase family. FabA subfamily. Homodimer.

It localises to the cytoplasm. It catalyses the reaction a (3R)-hydroxyacyl-[ACP] = a (2E)-enoyl-[ACP] + H2O. It carries out the reaction (3R)-hydroxydecanoyl-[ACP] = (2E)-decenoyl-[ACP] + H2O. The catalysed reaction is (2E)-decenoyl-[ACP] = (3Z)-decenoyl-[ACP]. The protein operates within lipid metabolism; fatty acid biosynthesis. Functionally, necessary for the introduction of cis unsaturation into fatty acids. Catalyzes the dehydration of (3R)-3-hydroxydecanoyl-ACP to E-(2)-decenoyl-ACP and then its isomerization to Z-(3)-decenoyl-ACP. Can catalyze the dehydratase reaction for beta-hydroxyacyl-ACPs with saturated chain lengths up to 16:0, being most active on intermediate chain length. The chain is 3-hydroxydecanoyl-[acyl-carrier-protein] dehydratase from Histophilus somni (strain 129Pt) (Haemophilus somnus).